The primary structure comprises 579 residues: Proteasome-associated ATPase (579 aa).

A disordered region spans residues 1–21 (MPRDETPEREHAEQQSRQALE). Residues 8–86 (EREHAEQQSR…REEVEKLTQP (79 aa)) are a coiled coil. Residue 268–273 (GCGKTL) coordinates ATP. Residues 578–579 (YL) are docks into pockets in the proteasome alpha-ring.

Belongs to the AAA ATPase family. In terms of assembly, homohexamer. Assembles into a hexameric ring structure that caps the 20S proteasome core. Strongly interacts with the prokaryotic ubiquitin-like protein Pup through a hydrophobic interface; the interacting region of ARC lies in its N-terminal coiled-coil domain. There is one Pup binding site per ARC hexamer ring. Upon ATP-binding, the C-terminus of ARC interacts with the alpha-rings of the proteasome core, possibly by binding to the intersubunit pockets.

It participates in protein degradation; proteasomal Pup-dependent pathway. In terms of biological role, ATPase which is responsible for recognizing, binding, unfolding and translocation of pupylated proteins into the bacterial 20S proteasome core particle. May be essential for opening the gate of the 20S proteasome via an interaction with its C-terminus, thereby allowing substrate entry and access to the site of proteolysis. Thus, the C-termini of the proteasomal ATPase may function like a 'key in a lock' to induce gate opening and therefore regulate proteolysis. In Acidimicrobium ferrooxidans (strain DSM 10331 / JCM 15462 / NBRC 103882 / ICP), this protein is Proteasome-associated ATPase.